Consider the following 533-residue polypeptide: MAAWSRTRLRWTLLDPRVVGRGLCPQGARAKATIPAALQAQESTEGPGTGQDRPRLRSPAELPGTGTLQFLFQLFLQGYVLHLPDLQVLNKTKYGPMWTTSFGTYTNVNLASAPLLEQVMRQEGKYPIRDHMDQWKDHRDHKGLTYGIFIAQGEQWYHLRQALKQRLLKPDEAALYTDALNEVISDFITRLDQVRAESESGDQVPDMAHLLYHLALEAITYILFEKRIGCLKPSIPEDTAAFIRSVAIMFQNSVYITFLPKWTRPLLPFWKRYLNGWDNIFSFGKKLIDEKVQELKAQLQETGPDGVRVSGYLHFLLTNELLSTQETIGTFPELLLAGVDTTSNTLTWALYHLSKSPEIQEALHKEVTGVVPFGKVPQHKDFAHMPLLKAVIKETLRLYPVVPTNSRIITEKETEINGFLFPKNTQFVLCHYVVSRDPSVFPEPNSFQPHRWLRKKEADNPGILHPFGSVPFGYGVRSCLGRRIAELEMQLMLSRLVQKYEIALAPGMGEVKTVSRIVLVPSKKVRLHFLQRQ.

Residues 1 to 32 (MAAWSRTRLRWTLLDPRVVGRGLCPQGARAKA) constitute a mitochondrion transit peptide. Residues 34-60 (IPAALQAQESTEGPGTGQDRPRLRSPA) form a disordered region. Lys-142, Lys-232, Lys-285, Lys-296, and Lys-375 each carry N6-acetyllysine. A sterol-binding region spans residues 386–400 (PLLKAVIKETLRLYP). Cys-479 is a binding site for heme. 2 positions are modified to N6-acetyllysine: Lys-512 and Lys-523.

Belongs to the cytochrome P450 family. As to quaternary structure, interacts with HSP70; this interaction is required for initial targeting to mitochondria. Heme is required as a cofactor. Acetylation of Lys-125 and Lys-285 is observed in liver mitochondria from fasted mice but not from fed mice. Expressed in the gray and white matter of cerebellum (at protein level).

It is found in the mitochondrion inner membrane. The catalysed reaction is 5beta-cholestane-3alpha,7alpha,12alpha-triol + 6 reduced [adrenodoxin] + 3 O2 + 5 H(+) = (25R)-3alpha,7alpha,12alpha-trihydroxy-5beta-cholestan-26-oate + 6 oxidized [adrenodoxin] + 4 H2O. The enzyme catalyses cholestanol + 2 reduced [adrenodoxin] + O2 + 2 H(+) = (25R)-26-hydroxycholestanol + 2 oxidized [adrenodoxin] + H2O. It carries out the reaction (25R)-3beta-hydroxycholest-5-en-7-one-26-al + 2 reduced [adrenodoxin] + O2 + H(+) = (25R)-3beta-hydroxycholest-5-en-7-one-26-oate + 2 oxidized [adrenodoxin] + H2O. It catalyses the reaction (25R)-3beta,26-dihydroxycholest-5-en-7-one + 2 reduced [adrenodoxin] + O2 + 2 H(+) = (25R)-3beta-hydroxycholest-5-en-7-one-26-al + 2 oxidized [adrenodoxin] + 2 H2O. The catalysed reaction is 7-oxocholesterol + 2 reduced [adrenodoxin] + O2 + 2 H(+) = (25R)-3beta,26-dihydroxycholest-5-en-7-one + 2 oxidized [adrenodoxin] + H2O. The enzyme catalyses calciol + 2 reduced [adrenodoxin] + O2 + 2 H(+) = calcidiol + 2 oxidized [adrenodoxin] + H2O. It carries out the reaction (25R)-5beta-cholestane-3alpha,7alpha,12alpha,26-tetrol + 2 reduced [adrenodoxin] + O2 + 2 H(+) = (25R)-3alpha,7alpha,12alpha-trihydroxy-5beta-cholestan-26-al + 2 oxidized [adrenodoxin] + 2 H2O. It catalyses the reaction 2 reduced [adrenodoxin] + cholesterol + O2 + 2 H(+) = (25R)-cholest-5-ene-3beta,26-diol + 2 oxidized [adrenodoxin] + H2O. The catalysed reaction is (25R)-3beta,4beta-dihydroxycholest-5-en-26-al + 2 reduced [adrenodoxin] + O2 + H(+) = (25R)-3beta,4beta-dihydroxycholest-5-en-26-oate + 2 oxidized [adrenodoxin] + H2O. The enzyme catalyses (25R)-4beta,26-dihydroxycholesterol + 2 reduced [adrenodoxin] + O2 + 2 H(+) = (25R)-3beta,4beta-dihydroxycholest-5-en-26-al + 2 oxidized [adrenodoxin] + 2 H2O. It carries out the reaction 4beta-hydroxycholesterol + 2 reduced [adrenodoxin] + O2 + 2 H(+) = (25R)-4beta,26-dihydroxycholesterol + 2 oxidized [adrenodoxin] + H2O. It catalyses the reaction (25R)-3beta-hydroxy-5-cholesten-26-al + 2 reduced [adrenodoxin] + O2 + H(+) = (25R)-3beta-hydroxy-5-cholestenoate + 2 oxidized [adrenodoxin] + H2O. The catalysed reaction is (25R)-cholest-5-ene-3beta,26-diol + 2 reduced [adrenodoxin] + O2 + 2 H(+) = (25R)-3beta-hydroxy-5-cholesten-26-al + 2 oxidized [adrenodoxin] + 2 H2O. The enzyme catalyses (25R)-3alpha,7alpha,12alpha-trihydroxy-5beta-cholestan-26-al + 2 reduced [adrenodoxin] + O2 + H(+) = (25R)-3alpha,7alpha,12alpha-trihydroxy-5beta-cholestan-26-oate + 2 oxidized [adrenodoxin] + H2O. It carries out the reaction 5beta-cholestane-3alpha,7alpha,12alpha-triol + 2 reduced [adrenodoxin] + O2 + 2 H(+) = (25R)-5beta-cholestane-3alpha,7alpha,12alpha,26-tetrol + 2 oxidized [adrenodoxin] + H2O. It functions in the pathway hormone biosynthesis; cholecalciferol biosynthesis. The protein operates within steroid metabolism; cholesterol degradation. Its pathway is lipid metabolism; bile acid biosynthesis. Its function is as follows. Cytochrome P450 monooxygenase that catalyzes regio- and stereospecific hydroxylation of cholesterol and its derivatives. Hydroxylates (with R stereochemistry) the terminal methyl group of cholesterol side-chain in a three step reaction to yield at first a C26 alcohol, then a C26 aldehyde and finally a C26 acid. Regulates cholesterol homeostasis by catalyzing the conversion of excess cholesterol to bile acids via both the 'neutral' (classic) and the 'acid' (alternative) pathways. May also regulate cholesterol homeostasis via generation of active oxysterols, which act as ligands for NR1H2 and NR1H3 nuclear receptors, modulating the transcription of genes involved in lipid metabolism. Plays a role in cholestanol metabolism in the cerebellum. Similarly to cholesterol, hydroxylates cholestanol and may facilitate sterol diffusion through the blood-brain barrier to the systemic circulation for further degradation. Also hydroxylates retinal 7-ketocholesterol, a noxious oxysterol with pro-inflammatory and pro-apoptotic effects, and may play a role in its elimination from the retinal pigment epithelium. May play a redundant role in vitamin D biosynthesis. Catalyzes 25-hydroxylation of vitamin D3 that is required for its conversion to a functionally active form. This is Sterol 26-hydroxylase, mitochondrial from Mus musculus (Mouse).